A 2395-amino-acid chain; its full sequence is MKRKVMNGKLRLSPNEEAFILKEDYERRRKLRLLQVREQERGIAFQIREDIKQRRNQQVSHLAEELRAEWEEAQSQKIQNLEKLYLASLRHMGDGHQQAKENEPDLDALSRRAAERKTKAEARHKEALKAQKKQKEMLMKQKTRHIKARKEAVLVEKERSAKMARLPPPVPSPFENIDINRIPSLKTNRSTYHHISAFVSRQMGTKQPDAHLAAEEEARRVERLRKQAAQERMEQSERAHARGSQAMKKIHLAQNQERLMEELKQLQREDLACKRQTAAQMPSQLLELPYRRSEMKEDWQRELEFAFEDVYSADRKVKGNLILHLKPEPLPTMSDQLQDEELDLSMEQENEVPLATKTQQIPSRILLKRLLNKIRNQKSLWTIKSFSEDDNQVTASIISEIERKVPSTDSGTITTGETAVSFEQEQVMGSDRLMIESGPPSSEDKPLCYKSVTGKEQAMGVSPPATTVAQSSVLLHPQEEAARLRMSARHKQIMEIEEQKQKQLELLEQIEQQKLRLETDCFQAQLEETRKQADHLEVRPAPVSHAMISDEERHRQMIRNYQYQLLQQNRLHKQTVETARKRLLEYQTVLKERCPSMSARSLIPDSVVSEPPQQAQKPAVASDYWDPSQRPKLSPSKYQPVQPSQIPALDQNHIQVPRQGHIPQRQGETARAKQSVESQERQWQFSQVETQQRDYEFIFKDSHSLSRTSSYVRPQTLQAAGEVSKPLRAIICQTSDSQQISSEDSENISSKPTEPSSSLPLMPECSSSSLSVKLESETIQKAFTTVNRSVISQMHGQPLSSSETGTTQQGDIRFLQGQLELQKKVLQERQEAQEKLLSCTQKELEEQTGIPVFFPSPVGNMFSSLPSASAESGNIQTSSTKSDATVSSDSMDNPYSQPISLRQTNLEFLQEQFSVEKDNLQARREAQEVSFTHTQSKLDKIVRSEQTGSSWPQLVALESFSSLTSADTQSRKIQKPPLPTNKKGLLPSQSEILSSQDGSSGFLQQTLPLQNTLKLLQEQLTIQRGMIQPRLNAQETLLLHKERCSVDSKAGPVNSLSSAVAQHSEAGPQSLQELYSSKKENTVLSSHLITPEVQEESHGSPQHSLPRQEHFASLQEQAHIQRVILGARKQIQEFAHKQNEFKKGLYSQQTGALSSPSQGTGWEISQESLSVRSDSTDPLSHFKIPGFQERLVRALQPTFPLRDNLQEHQEWVDPEKESFQFSPQTQENRSSQQTGFSSFTPSLRQPSCVSLPSVDSGITQHPLSTERDSKVTSSHLQIPELQHRLLKISQLIQPQQDSLKALQEQLATSRTIIHSRQEALEETLREWKEKIFPEQVGPFSPLMTQHSFASFPVSDIERAQELCSTNSEGAISSGYSEMLELPDRALGLSCTALPQQGNLTVHPGHLHAQTNSFHSTEKAQEKLVFPRPCKLEEISAEHSIQPPHDDLQALQQQLDVHREAIRSCQDIQEELLLQRLNKLEQRVSSKQISSSPLLSQVALPIANSEGTLQSSPAKNDDTEMLRSHSEYLNFSQPLQDNVTEQLDLEVVFHKELLLHKQKSQTKSESPEHAAPFNDAVIPRLQDRLLSYFQPALTQQDSMSPQKQLNLQREALYSRQKAQEELLVQRQTALQQQVQKHRETLKGFSNVSQTRAASGENDLEMQKTEQLTGWFPHIQGWPWGDSSQGSSSGDQPGAAAVHAEHSGESLGKELSGRASKPPVSKVKCVFDLNQHELSTIQEVESPTSGRTSMPGKAEFYRDRDPLRVSVSREQSYLGSPVAHDPFGCHQPSVQENSKSHDTAKAVKVKKSDIEDHALLSHAISEEEEEEEACTNLSPLMKPDDEVETQEISQELLSSMTVSTGSFLSYEITDLSLTDPESFSEQTEHQEQESSSKEEETGSLSCAVPSTQVTYQQQHSLGAHNSLLPTEEENASDQTHVHQIIDKDINEANLIPDKRDFQVPAVDLDFPELEHLFPHLHRQLFKPLEPHLDLDLSSPGTSQEDRDFYQQNSESSSEKHVKALSTSTLCFTALTAGSHSPNSRLNQQLDVNLAHATTEGSEQSFQQLLPEFSSQESQHTDLPSIYSIEARGTSQSMENQNYSEILQNKKKSIYFQPSTENLSPACSSSDTTLFDQLHPQHSTPCGSVSSEGSVKQLEGREEMLGFEELSRRAVPMSQRLTEDENVVLPINPYVGTVEMETSIQGSNSLSIQNEKPIQNVIKTETTKAVRNVCQLAQEEHMLKSESCPFRRPIPVWETETGYGIMEEPDLTLLSTSDISITDTDLANLTIEDNEAQCSQAGAVQPSSSVETTFCGAASEPWADQPTVASSAIPGSLGEAFMKRKKTFMERSYQRQREIWNKTPLPQAKVSKEKLSTSSSLSHLKEAVSGDETAKRNRSQCI.

The segment at 1 to 540 (MKRKVMNGKL…KQADHLEVRP (540 aa)) is necessary for centriole targeting and microtubule association. Serine 13 carries the post-translational modification Phosphoserine. Coiled coils occupy residues 53-84 (QRRNQQVSHLAEELRAEWEEAQSQKIQNLEKL), 114-148 (AERKTKAEARHKEALKAQKKQKEMLMKQKTRHIKA), 209-277 (DAHL…KRQT), 488-538 (ARHK…HLEV), and 567-592 (QQNRLHKQTVETARKRLLEYQTVLKE). 3 disordered regions span residues 602–643 (LIPD…PVQP), 660–681 (GHIPQRQGETARAKQSVESQER), and 735–764 (SDSQQISSEDSENISSKPTEPSSSLPLMPE). A Phosphoserine modification is found at serine 634. A compositionally biased stretch (low complexity) spans 735–750 (SDSQQISSEDSENISS). Positions 817–848 (GQLELQKKVLQERQEAQEKLLSCTQKELEEQT) form a coiled coil. Disordered regions lie at residues 864-893 (SLPSASAESGNIQTSSTKSDATVSSDSMDN), 966-986 (ADTQSRKIQKPPLPTNKKGLL), and 1212-1272 (VDPE…SKVT). A compositionally biased stretch (polar residues) spans 1219-1250 (FQFSPQTQENRSSQQTGFSSFTPSLRQPSCVS). Positions 1444-1488 (HDDLQALQQQLDVHREAIRSCQDIQEELLLQRLNKLEQRVSSKQI) form a coiled coil. A Phosphoserine modification is found at serine 1565. Residues 1677-1692 (PWGDSSQGSSSGDQPG) show a composition bias toward low complexity. Disordered stretches follow at residues 1677–1715 (PWGDSSQGSSSGDQPGAAAVHAEHSGESLGKELSGRASK), 1819–1845 (SEEEEEEEACTNLSPLMKPDDEVETQE), 1875–1899 (ESFSEQTEHQEQESSSKEEETGSLS), 1989–2013 (DLSSPGTSQEDRDFYQQNSESSSEK), and 2354–2395 (NKTP…SQCI). A compositionally biased stretch (basic and acidic residues) spans 1697 to 1710 (HAEHSGESLGKELS). Over residues 1880–1894 (QTEHQEQESSSKEEE) the composition is skewed to basic and acidic residues. The segment at 2329-2395 (SLGEAFMKRK…TAKRNRSQCI (67 aa)) is ALMS motif. The segment covering 2376 to 2388 (HLKEAVSGDETAK) has biased composition (basic and acidic residues).

As to quaternary structure, interacts (via ALMS motif) with microtubules; this interaction is direct.

It is found in the cytoplasm. Its subcellular location is the cytoskeleton. It localises to the microtubule organizing center. The protein localises to the centrosome. The protein resides in the centriole. It is found in the spindle. Centriole-enriched microtubule-binding protein involved in centriole biogenesis. Essential for the generation of the distal portion of new-born centrioles in a CPAP- and CEP120-mediated elongation dependent manner during the cell cycle S/G2 phase after formation of the initiating cartwheel structure. Required for the recruitment of centriolar proteins, such as POC1B, POC5 and CEP135, into the distal portion of centrioles. Also required for centriole-to-centrosome conversion during mitotic progression, but is dispensable for cartwheel removal or centriole disengagement. Binds to and stabilizes centriolar microtubule. May be involved in ciliogenesis. The polypeptide is Centrosomal protein of 295 kDa (Rattus norvegicus (Rat)).